We begin with the raw amino-acid sequence, 426 residues long: Serine--tRNA ligase (426 aa).

Threonine 235–glutamate 237 serves as a coordination point for L-serine. ATP contacts are provided by residues arginine 266–glutamate 268 and valine 282. An L-serine-binding site is contributed by glutamate 289. Glutamate 353 to serine 356 serves as a coordination point for ATP. Serine 389 contacts L-serine.

It belongs to the class-II aminoacyl-tRNA synthetase family. Type-1 seryl-tRNA synthetase subfamily. Homodimer. The tRNA molecule binds across the dimer.

Its subcellular location is the cytoplasm. It catalyses the reaction tRNA(Ser) + L-serine + ATP = L-seryl-tRNA(Ser) + AMP + diphosphate + H(+). It carries out the reaction tRNA(Sec) + L-serine + ATP = L-seryl-tRNA(Sec) + AMP + diphosphate + H(+). It functions in the pathway aminoacyl-tRNA biosynthesis; selenocysteinyl-tRNA(Sec) biosynthesis; L-seryl-tRNA(Sec) from L-serine and tRNA(Sec): step 1/1. In terms of biological role, catalyzes the attachment of serine to tRNA(Ser). Is also able to aminoacylate tRNA(Sec) with serine, to form the misacylated tRNA L-seryl-tRNA(Sec), which will be further converted into selenocysteinyl-tRNA(Sec). The polypeptide is Serine--tRNA ligase (Chlorobium chlorochromatii (strain CaD3)).